We begin with the raw amino-acid sequence, 205 residues long: Thymidylate kinase (205 aa).

10 to 17 lines the ATP pocket; it reads GIDGAGKS.

The protein belongs to the thymidylate kinase family.

The catalysed reaction is dTMP + ATP = dTDP + ADP. Functionally, phosphorylation of dTMP to form dTDP in both de novo and salvage pathways of dTTP synthesis. The polypeptide is Thymidylate kinase (Ralstonia nicotianae (strain ATCC BAA-1114 / GMI1000) (Ralstonia solanacearum)).